The chain runs to 241 residues: Diacetyl reductase [(S)-acetoin forming] (241 aa).

6-30 (LVTGAGQGIGKAIALRLVKDGFAVA) lines the NAD(+) pocket. Ser-139 serves as a coordination point for substrate. Tyr-152 functions as the Proton acceptor in the catalytic mechanism. Lys-156 is a catalytic residue.

The protein belongs to the short-chain dehydrogenases/reductases (SDR) family. In terms of assembly, homotetramer.

It catalyses the reaction (S)-acetoin + NAD(+) = diacetyl + NADH + H(+). In terms of biological role, catalyzes the irreversible reduction of 2,3-butanediol to (S)-acetoin in the presence of NADH. The sequence is that of Diacetyl reductase [(S)-acetoin forming] (budC) from Raoultella terrigena (Klebsiella terrigena).